A 274-amino-acid polypeptide reads, in one-letter code: Large ribosomal subunit protein uL2 (274 aa).

Disordered stretches follow at residues 28 to 54 (KPYA…TRHI) and 221 to 274 (RGTA…RTKK). Residues 39 to 49 (KTGGRNNNGRI) are compositionally biased toward polar residues.

It belongs to the universal ribosomal protein uL2 family. In terms of assembly, part of the 50S ribosomal subunit. Forms a bridge to the 30S subunit in the 70S ribosome.

One of the primary rRNA binding proteins. Required for association of the 30S and 50S subunits to form the 70S ribosome, for tRNA binding and peptide bond formation. It has been suggested to have peptidyltransferase activity; this is somewhat controversial. Makes several contacts with the 16S rRNA in the 70S ribosome. The protein is Large ribosomal subunit protein uL2 of Photorhabdus laumondii subsp. laumondii (strain DSM 15139 / CIP 105565 / TT01) (Photorhabdus luminescens subsp. laumondii).